The following is a 467-amino-acid chain: ATP synthase subunit beta 1 (467 aa).

150 to 157 is an ATP binding site; it reads GGAGVGKT.

This sequence belongs to the ATPase alpha/beta chains family. In terms of assembly, F-type ATPases have 2 components, CF(1) - the catalytic core - and CF(0) - the membrane proton channel. CF(1) has five subunits: alpha(3), beta(3), gamma(1), delta(1), epsilon(1). CF(0) has three main subunits: a(1), b(2) and c(9-12). The alpha and beta chains form an alternating ring which encloses part of the gamma chain. CF(1) is attached to CF(0) by a central stalk formed by the gamma and epsilon chains, while a peripheral stalk is formed by the delta and b chains.

The protein resides in the cell inner membrane. It catalyses the reaction ATP + H2O + 4 H(+)(in) = ADP + phosphate + 5 H(+)(out). In terms of biological role, produces ATP from ADP in the presence of a proton gradient across the membrane. The catalytic sites are hosted primarily by the beta subunits. The polypeptide is ATP synthase subunit beta 1 (Vibrio campbellii (strain ATCC BAA-1116)).